The chain runs to 595 residues: NADH-quinone oxidoreductase subunit C/D (595 aa).

The segment at 1–185 is NADH dehydrogenase I subunit C; the sequence is MTDLTAQAAC…DPFELTKAKQ (185 aa). The interval 209–595 is NADH dehydrogenase I subunit D; that stretch reads DFMFLNLGPN…IDFVMSDVDR (387 aa).

The protein in the N-terminal section; belongs to the complex I 30 kDa subunit family. In the C-terminal section; belongs to the complex I 49 kDa subunit family. As to quaternary structure, NDH-1 is composed of 13 different subunits. Subunits NuoB, CD, E, F, and G constitute the peripheral sector of the complex.

It localises to the cell inner membrane. It carries out the reaction a quinone + NADH + 5 H(+)(in) = a quinol + NAD(+) + 4 H(+)(out). Functionally, NDH-1 shuttles electrons from NADH, via FMN and iron-sulfur (Fe-S) centers, to quinones in the respiratory chain. The immediate electron acceptor for the enzyme in this species is believed to be ubiquinone. Couples the redox reaction to proton translocation (for every two electrons transferred, four hydrogen ions are translocated across the cytoplasmic membrane), and thus conserves the redox energy in a proton gradient. The chain is NADH-quinone oxidoreductase subunit C/D from Enterobacter sp. (strain 638).